We begin with the raw amino-acid sequence, 225 residues long: Rho GDP-dissociation inhibitor 3 (225 aa).

The protein belongs to the Rho GDI family. Detected only in brain, lung, kidney and testis.

The protein resides in the cytoplasm. Its function is as follows. Inhibits GDP/GTP exchange reaction of RhoB. Interacts specifically with the GDP- and GTP-bound forms of post-translationally processed Rhob and Rhog proteins, both of which show a growth-regulated expression in mammalian cells. Stimulates the release of the GDP-bound but not the GTP-bound RhoB protein. Also inhibits the GDP/GTP exchange of RhoB but shows less ability to inhibit the dissociation of prebound GTP. This is Rho GDP-dissociation inhibitor 3 (Arhgdig) from Mus musculus (Mouse).